We begin with the raw amino-acid sequence, 63 residues long: Cysteine-rich venom protein 3 (63 aa).

The N-terminal stretch at Met-1–Ala-25 is a signal peptide. 3 cysteine pairs are disulfide-bonded: Cys-29–Cys-43, Cys-36–Cys-48, and Cys-42–Cys-58.

Expressed by the venom gland.

It is found in the secreted. This chain is Cysteine-rich venom protein 3, found in Pimpla hypochondriaca (Parasitoid wasp).